The following is a 72-amino-acid chain: GDDVKSACCDTCLCTKSNPPTCRCVDVGETCHSACLSCICAYSNPPKCQCFDTQKFCYKACHNSELEEVIKN.

7 cysteine pairs are disulfide-bonded: cysteine 8/cysteine 61, cysteine 9/cysteine 24, cysteine 12/cysteine 57, cysteine 14/cysteine 22, cysteine 31/cysteine 38, cysteine 35/cysteine 50, and cysteine 40/cysteine 48.

Belongs to the Bowman-Birk serine protease inhibitor family. Seed.

Functionally, inhibitor of trypsin and of chymotrypsin. May function as a natural phytochemical defense against predators. This Pisum sativum (Garden pea) protein is Seed trypsin/chymotrypsin inhibitor IVB.